A 423-amino-acid polypeptide reads, in one-letter code: Gamma-glutamyl phosphate reductase (423 aa).

Belongs to the gamma-glutamyl phosphate reductase family.

It is found in the cytoplasm. The catalysed reaction is L-glutamate 5-semialdehyde + phosphate + NADP(+) = L-glutamyl 5-phosphate + NADPH + H(+). It participates in amino-acid biosynthesis; L-proline biosynthesis; L-glutamate 5-semialdehyde from L-glutamate: step 2/2. Functionally, catalyzes the NADPH-dependent reduction of L-glutamate 5-phosphate into L-glutamate 5-semialdehyde and phosphate. The product spontaneously undergoes cyclization to form 1-pyrroline-5-carboxylate. The polypeptide is Gamma-glutamyl phosphate reductase (Burkholderia ambifaria (strain MC40-6)).